The following is a 327-amino-acid chain: DNA-directed RNA polymerase subunit alpha (327 aa).

Positions 1–233 (MQGSVTEFLK…EQLEAFVDLR (233 aa)) are alpha N-terminal domain (alpha-NTD). Positions 247 to 327 (FDPVLLRPVD…NWPPLGFIDK (81 aa)) are alpha C-terminal domain (alpha-CTD).

It belongs to the RNA polymerase alpha chain family. In terms of assembly, homodimer. The RNAP catalytic core consists of 2 alpha, 1 beta, 1 beta' and 1 omega subunit. When a sigma factor is associated with the core the holoenzyme is formed, which can initiate transcription.

It carries out the reaction RNA(n) + a ribonucleoside 5'-triphosphate = RNA(n+1) + diphosphate. In terms of biological role, DNA-dependent RNA polymerase catalyzes the transcription of DNA into RNA using the four ribonucleoside triphosphates as substrates. The sequence is that of DNA-directed RNA polymerase subunit alpha from Baumannia cicadellinicola subsp. Homalodisca coagulata.